A 318-amino-acid polypeptide reads, in one-letter code: Thymidylate synthase (318 aa).

Residues arginine 25 and 180–181 each bind dUMP; that span reads RR. Residue cysteine 200 is the Nucleophile of the active site. Residues 220–223, asparagine 231, and 261–263 each bind dUMP; these read RSGD and HIY. Residue aspartate 223 coordinates (6R)-5,10-methylene-5,6,7,8-tetrahydrofolate. (6R)-5,10-methylene-5,6,7,8-tetrahydrofolate is bound at residue alanine 317.

This sequence belongs to the thymidylate synthase family. Bacterial-type ThyA subfamily. In terms of assembly, homodimer.

It is found in the cytoplasm. The enzyme catalyses dUMP + (6R)-5,10-methylene-5,6,7,8-tetrahydrofolate = 7,8-dihydrofolate + dTMP. It functions in the pathway pyrimidine metabolism; dTTP biosynthesis. Functionally, catalyzes the reductive methylation of 2'-deoxyuridine-5'-monophosphate (dUMP) to 2'-deoxythymidine-5'-monophosphate (dTMP) while utilizing 5,10-methylenetetrahydrofolate (mTHF) as the methyl donor and reductant in the reaction, yielding dihydrofolate (DHF) as a by-product. This enzymatic reaction provides an intracellular de novo source of dTMP, an essential precursor for DNA biosynthesis. The protein is Thymidylate synthase of Bacillus thuringiensis subsp. konkukian (strain 97-27).